Reading from the N-terminus, the 164-residue chain is ATP synthase subunit b (164 aa).

Residues 8-28 (FGIIFWQTITLLFVLFILGKF) traverse the membrane as a helical segment.

This sequence belongs to the ATPase B chain family. In terms of assembly, F-type ATPases have 2 components, F(1) - the catalytic core - and F(0) - the membrane proton channel. F(1) has five subunits: alpha(3), beta(3), gamma(1), delta(1), epsilon(1). F(0) has three main subunits: a(1), b(2) and c(10-14). The alpha and beta chains form an alternating ring which encloses part of the gamma chain. F(1) is attached to F(0) by a central stalk formed by the gamma and epsilon chains, while a peripheral stalk is formed by the delta and b chains.

It is found in the cell membrane. In terms of biological role, f(1)F(0) ATP synthase produces ATP from ADP in the presence of a proton or sodium gradient. F-type ATPases consist of two structural domains, F(1) containing the extramembraneous catalytic core and F(0) containing the membrane proton channel, linked together by a central stalk and a peripheral stalk. During catalysis, ATP synthesis in the catalytic domain of F(1) is coupled via a rotary mechanism of the central stalk subunits to proton translocation. Component of the F(0) channel, it forms part of the peripheral stalk, linking F(1) to F(0). The chain is ATP synthase subunit b from Amoebophilus asiaticus (strain 5a2).